The chain runs to 567 residues: MFS-type transporter poxA (567 aa).

The segment covering 1–23 (MPASDRTSETGDVEKVTAAETPK) has biased composition (basic and acidic residues). The tract at residues 1 to 24 (MPASDRTSETGDVEKVTAAETPKE) is disordered. 10 helical membrane-spanning segments follow: residues 35-55 (ALTG…LFLG), 77-97 (ADIG…QLLA), 108-128 (LVFL…GVAV), 141-161 (GAGA…VVPL), 165-185 (SLIL…GPVI), 197-217 (WCFY…ILFF), 240-260 (LAGC…LQWG), 271-291 (SATI…FLIW), 311-331 (IIAS…VGYF), and 349-369 (VMLL…GVIV). N370 carries an N-linked (GlcNAc...) asparagine glycan. The next 4 membrane-spanning stretches (helical) occupy residues 372–392 (TGYF…GSGL), 410–430 (ILQG…QVAL), 436–456 (LIPV…SIML), and 515–535 (AIAG…LVSF). Residues 547–567 (EENKKEAAEEEEEVKVAAVEA) form a disordered region.

The protein belongs to the major facilitator superfamily. TCR/Tet family.

It is found in the cell membrane. MFS-type transporter; part of the gene cluster that mediates the biosynthesis of oxaleimides, cytotoxic compounds containing an unusual disubstituted succinimide moiety. This is MFS-type transporter poxA from Penicillium oxalicum (strain 114-2 / CGMCC 5302) (Penicillium decumbens).